The chain runs to 125 residues: Small ribosomal subunit protein uS12 (125 aa).

D89 is subject to 3-methylthioaspartic acid. The disordered stretch occupies residues 101–125 (SLDTAGVKDRKQSRSKYGAKRPKKA). The segment covering 113–125 (SRSKYGAKRPKKA) has biased composition (basic residues).

Belongs to the universal ribosomal protein uS12 family. Part of the 30S ribosomal subunit. Contacts proteins S8 and S17. May interact with IF1 in the 30S initiation complex.

With S4 and S5 plays an important role in translational accuracy. In terms of biological role, interacts with and stabilizes bases of the 16S rRNA that are involved in tRNA selection in the A site and with the mRNA backbone. Located at the interface of the 30S and 50S subunits, it traverses the body of the 30S subunit contacting proteins on the other side and probably holding the rRNA structure together. The combined cluster of proteins S8, S12 and S17 appears to hold together the shoulder and platform of the 30S subunit. The chain is Small ribosomal subunit protein uS12 from Thiobacillus denitrificans (strain ATCC 25259 / T1).